We begin with the raw amino-acid sequence, 925 residues long: Coronin-7 (925 aa).

WD repeat units follow at residues C75–P115, P124–E163, A166–Q205, and A209–A253. Residues V419–R461 form a disordered region. Positions S429–L460 are enriched in low complexity. Residues S462 and S465 each carry the phosphoserine modification. Residue K472 forms a Glycyl lysine isopeptide (Lys-Gly) (interchain with G-Cter in ubiquitin) linkage. 3 WD repeats span residues Q542–V582, G592–K632, and G635–Q674. K680 participates in a covalent cross-link: Glycyl lysine isopeptide (Lys-Gly) (interchain with G-Cter in ubiquitin). One copy of the WD 8 repeat lies at D728–L768. The disordered stretch occupies residues Q858–D925. Residues S866–Q882 show a composition bias toward low complexity. A compositionally biased stretch (basic and acidic residues) spans L884–L896. Position 915 is a phosphoserine (S915).

The protein belongs to the WD repeat coronin family. Interacts with clathrin adapter AP1 complex. This interaction takes place at Golgi membranes and not AP1-positive endosomal membranes. Interacts (when ubiquitinated at Lys-472) with EPS15. In terms of processing, the membrane-associated form is phosphorylated on tyrosine residues. Ubiquitinated via 'Lys-33'-linked ubiquitin chains by the BCR(KLHL20) E3 ubiquitin ligase complex: 'Lys-33'-linked ubiquitination promotes interaction with EPS15 and facilitates actin polymerization at the trans-Golgi network, thereby facilitating post-Golgi trafficking. Deubiquitinated by ZRANB1/TRABID. Widely expressed. Expressed in the spleen, peripheral leukocytes, testes, brain, thymus and small intestine.

Its subcellular location is the golgi apparatus membrane. It is found in the golgi apparatus. It localises to the trans-Golgi network. The protein localises to the cytoplasmic vesicle. The protein resides in the cytoplasm. Its subcellular location is the cytosol. In terms of biological role, F-actin regulator involved in anterograde Golgi to endosome transport: upon ubiquitination via 'Lys-33'-linked ubiquitin chains by the BCR(KLHL20) E3 ubiquitin ligase complex, interacts with EPS15 and localizes to the trans-Golgi network, where it promotes actin polymerization, thereby facilitating post-Golgi trafficking. May play a role in the maintenance of the Golgi apparatus morphology. The sequence is that of Coronin-7 (CORO7) from Homo sapiens (Human).